A 361-amino-acid polypeptide reads, in one-letter code: E3 ubiquitin-protein ligase TM129 (361 aa).

At 1-6 (MDRPDA) the chain is on the lumenal side. Residues 7-27 (TFTLAYVVFALCFVFTPNEFR) traverse the membrane as a helical segment. The Cytoplasmic segment spans residues 28–56 (SAGFTVQHMFSEWLGSEDISFIQHHIRRT). The chain crosses the membrane as a helical span at residues 57 to 77 (TLTVLFHSFLPLGYYIGMCFA). Residues 78 to 94 (APEQNLMYVHHASQGWQ) lie on the Lumenal side of the membrane. The helical transmembrane segment at 95–115 (MYFGLSLVIQLLSCALAFYWS) threads the bilayer. Residues 116-361 (RRGWANHPIC…FCILDVCPIE (246 aa)) lie on the Cytoplasmic side of the membrane. The RING-type; degenerate zinc-finger motif lies at 285-349 (CIGCMQVNAN…SSRVPCPTCR (65 aa)).

Belongs to the TMEM129 family. In terms of assembly, integral component of ER-resident dislocation complexes.

The protein resides in the endoplasmic reticulum membrane. The enzyme catalyses S-ubiquitinyl-[E2 ubiquitin-conjugating enzyme]-L-cysteine + [acceptor protein]-L-lysine = [E2 ubiquitin-conjugating enzyme]-L-cysteine + N(6)-ubiquitinyl-[acceptor protein]-L-lysine.. Its pathway is protein modification; protein ubiquitination. In terms of biological role, E3 ubiquitin-protein ligase involved in ER-associated protein degradation, preferentially associates with the E2 enzyme UBE2J2. This Danio rerio (Zebrafish) protein is E3 ubiquitin-protein ligase TM129 (tmem129).